Consider the following 519-residue polypeptide: Cytochrome P450 52A13 (519 aa).

Position 466 (C466) interacts with heme.

This sequence belongs to the cytochrome P450 family. It depends on heme as a cofactor.

Its subcellular location is the membrane. Its function is as follows. Together with an NADPH cytochrome P450 the enzyme system catalyzes the terminal hydroxylation as the first step in the assimilation of alkanes and fatty acids. The polypeptide is Cytochrome P450 52A13 (CYP52A13) (Debaryomyces hansenii (Yeast)).